The chain runs to 448 residues: Phosphohexose mutases (448 aa).

The Phosphoserine intermediate role is filled by Ser-97. 4 residues coordinate Mg(2+): Ser-97, Asp-237, Asp-239, and Asp-241.

This sequence belongs to the phosphohexose mutase family. It depends on Mg(2+) as a cofactor.

It catalyses the reaction alpha-D-glucose 1-phosphate = alpha-D-glucose 6-phosphate. The catalysed reaction is alpha-D-mannose 1-phosphate = D-mannose 6-phosphate. Its pathway is nucleotide-sugar biosynthesis; GDP-alpha-D-mannose biosynthesis; alpha-D-mannose 1-phosphate from D-fructose 6-phosphate: step 2/2. Involved in xanthan production. This is Phosphohexose mutases (xanA) from Xanthomonas campestris pv. campestris (strain ATCC 33913 / DSM 3586 / NCPPB 528 / LMG 568 / P 25).